Consider the following 110-residue polypeptide: DNA-binding protein Mlab_1482 (110 aa).

This sequence belongs to the PDCD5 family.

The polypeptide is DNA-binding protein Mlab_1482 (Methanocorpusculum labreanum (strain ATCC 43576 / DSM 4855 / Z)).